A 303-amino-acid polypeptide reads, in one-letter code: Tyrosine-protein phosphatase 3 (303 aa).

The Tyrosine-protein phosphatase domain occupies 24-292 (YMIIEGLNEE…VFLYTVSQEL (269 aa)). The active-site Phosphocysteine intermediate is the cysteine 227.

Belongs to the protein-tyrosine phosphatase family. Non-receptor class subfamily.

Its subcellular location is the cytoplasm. It carries out the reaction O-phospho-L-tyrosyl-[protein] + H2O = L-tyrosyl-[protein] + phosphate. Contributes to dephosphorylation of tyrosine 15 of cdc2. The chain is Tyrosine-protein phosphatase 3 (pyp3) from Schizosaccharomyces pombe (strain 972 / ATCC 24843) (Fission yeast).